A 313-amino-acid chain; its full sequence is Ester hydrolase C11orf54 homolog (313 aa).

3 residues coordinate Zn(2+): H264, H266, and H276.

As to quaternary structure, monomer. The cofactor is Zn(2+).

It localises to the nucleus. Its subcellular location is the cytoplasm. Functionally, exhibits ester hydrolase activity on the substrate p-nitrophenyl acetate, in vitro. May regulate DNA damage and repair by regulating HIF1A degradation via chaperone-mediated autophagy (CMA). This Xenopus tropicalis (Western clawed frog) protein is Ester hydrolase C11orf54 homolog.